A 341-amino-acid chain; its full sequence is Anthranilate phosphoribosyltransferase (341 aa).

5-phospho-alpha-D-ribose 1-diphosphate-binding positions include glycine 79, 82-83, threonine 87, 89-92, 107-115, and serine 119; these read GD, NIST, and KHGNRAVSS. Glycine 79 lines the anthranilate pocket. A Mg(2+)-binding site is contributed by serine 91. Residue asparagine 110 coordinates anthranilate. Position 165 (arginine 165) interacts with anthranilate. Residues aspartate 224 and glutamate 225 each coordinate Mg(2+).

This sequence belongs to the anthranilate phosphoribosyltransferase family. In terms of assembly, homodimer. Mg(2+) is required as a cofactor.

The catalysed reaction is N-(5-phospho-beta-D-ribosyl)anthranilate + diphosphate = 5-phospho-alpha-D-ribose 1-diphosphate + anthranilate. The protein operates within amino-acid biosynthesis; L-tryptophan biosynthesis; L-tryptophan from chorismate: step 2/5. In terms of biological role, catalyzes the transfer of the phosphoribosyl group of 5-phosphorylribose-1-pyrophosphate (PRPP) to anthranilate to yield N-(5'-phosphoribosyl)-anthranilate (PRA). In Bacillus cereus (strain AH187), this protein is Anthranilate phosphoribosyltransferase.